Here is a 63-residue protein sequence, read N- to C-terminus: Beta-defensin 3 (63 aa).

An N-terminal signal peptide occupies residues 1 to 20 (MRIHYLLFSFLLVLLSPLSA). Positions 21-22 (FS) are excised as a propeptide. 3 disulfide bridges follow: Cys31–Cys59, Cys38–Cys52, and Cys42–Cys60.

The protein belongs to the beta-defensin family.

Its subcellular location is the secreted. Functionally, has bactericidal activity. The polypeptide is Beta-defensin 3 (Defb3) (Rattus norvegicus (Rat)).